The primary structure comprises 242 residues: Ubiquinone biosynthesis O-methyltransferase (242 aa).

S-adenosyl-L-methionine-binding residues include Arg44, Gly64, Asp85, and Met129.

Belongs to the methyltransferase superfamily. UbiG/COQ3 family.

It catalyses the reaction a 3-demethylubiquinol + S-adenosyl-L-methionine = a ubiquinol + S-adenosyl-L-homocysteine + H(+). The catalysed reaction is a 3-(all-trans-polyprenyl)benzene-1,2-diol + S-adenosyl-L-methionine = a 2-methoxy-6-(all-trans-polyprenyl)phenol + S-adenosyl-L-homocysteine + H(+). It functions in the pathway cofactor biosynthesis; ubiquinone biosynthesis. In terms of biological role, O-methyltransferase that catalyzes the 2 O-methylation steps in the ubiquinone biosynthetic pathway. The protein is Ubiquinone biosynthesis O-methyltransferase of Klebsiella pneumoniae (strain 342).